Consider the following 694-residue polypeptide: Phosphatase and actin regulator 4 (694 aa).

Disordered regions lie at residues 1-354 and 375-405; these read MEDP…SPLV and QDIS…PSRL. Positions 45-54 are enriched in basic residues; it reads KPWKWRKKKS. Positions 55–84 are enriched in basic and acidic residues; the sequence is SDKFKETSEVLERKISMRKPREELVKRGVL. An RPEL 1 repeat occupies 63–88; it reads EVLERKISMRKPREELVKRGVLLEDP. 4 positions are modified to phosphoserine: Ser116, Ser118, Ser129, and Ser145. Composition is skewed to low complexity over residues 184-209 and 231-249; these read AGST…TAAT and TLPA…TAPA. Pro residues predominate over residues 250–259; it reads KQPPIPPPKP. Ser264, Ser285, Ser335, and Ser337 each carry phosphoserine. Over residues 329 to 352 the composition is skewed to pro residues; sequence LIIPPSSPSPPLPTHIPPEPPRSP. Residues 381–392 show a composition bias toward basic and acidic residues; it reads EDQKTEVPKKIQ. Residue Ser420 is modified to Phosphoserine. Position 425 is a phosphothreonine (Thr425). Phosphoserine is present on residues Ser436, Ser446, Ser457, Ser503, Ser505, Ser549, and Ser582. The tract at residues 467-562 is disordered; the sequence is VPDDEEEEQT…TNLNSWPRKS (96 aa). Over residues 546–559 the composition is skewed to polar residues; sequence SRPSEPETNLNSWP. 2 RPEL repeats span residues 575-600 and 613-638; these read NTLI…QPKN and RRLT…RFNE. The segment at 589 to 608 is disordered; sequence ELEQRNILQPKNEADRQAEK. Ser620 is subject to Phosphoserine.

This sequence belongs to the phosphatase and actin regulator family. Binds PPP1CA and actin.

Its subcellular location is the cytoplasm. It is found in the cell projection. It localises to the lamellipodium. Its function is as follows. Regulator of protein phosphatase 1 (PP1) required for neural tube and optic fissure closure, and enteric neural crest cell (ENCCs) migration during development. Acts as an activator of PP1 by interacting with PPP1CA and preventing phosphorylation of PPP1CA at 'Thr-320'. During neural tube closure, localizes to the ventral neural tube and activates PP1, leading to down-regulate cell proliferation within cranial neural tissue and the neural retina. Also acts as a regulator of migration of enteric neural crest cells (ENCCs) by activating PP1, leading to dephosphorylation and subsequent activation of cofilin (COF1 or COF2) and repression of the integrin signaling through the RHO/ROCK pathway. In Mus musculus (Mouse), this protein is Phosphatase and actin regulator 4 (Phactr4).